Consider the following 279-residue polypeptide: Undecaprenyl-diphosphatase (279 aa).

8 consecutive transmembrane segments (helical) span residues Leu-2–Leu-22, Ala-44–Ile-64, Trp-85–Leu-105, Phe-113–Ile-133, Val-163–Leu-183, Thr-188–Leu-208, Ala-223–Ile-243, and Phe-255–Phe-275.

Belongs to the UppP family.

It localises to the cell membrane. It carries out the reaction di-trans,octa-cis-undecaprenyl diphosphate + H2O = di-trans,octa-cis-undecaprenyl phosphate + phosphate + H(+). Catalyzes the dephosphorylation of undecaprenyl diphosphate (UPP). Confers resistance to bacitracin. The sequence is that of Undecaprenyl-diphosphatase from Streptococcus pyogenes serotype M2 (strain MGAS10270).